Here is a 250-residue protein sequence, read N- to C-terminus: Cell division protein ZapD (250 aa).

The protein belongs to the ZapD family. In terms of assembly, interacts with FtsZ.

Its subcellular location is the cytoplasm. In terms of biological role, cell division factor that enhances FtsZ-ring assembly. Directly interacts with FtsZ and promotes bundling of FtsZ protofilaments, with a reduction in FtsZ GTPase activity. The polypeptide is Cell division protein ZapD (Yersinia pseudotuberculosis serotype O:1b (strain IP 31758)).